The primary structure comprises 102 residues: COX assembly mitochondrial protein 2 homolog (102 aa).

The region spanning 11–55 (TKECNMLIEFLQRCHSEKPIGKMIGKCSYWDEAVWQCTKKERIWR) is the CHCH domain. Short sequence motifs (cx9C motif) lie at residues 14-24 (CNMLIEFLQRC) and 37-47 (CSYWDEAVWQC). 2 disulfides stabilise this stretch: C14–C47 and C24–C37.

This sequence belongs to the CMC family.

The protein resides in the mitochondrion. Functionally, may be involved in cytochrome c oxidase biogenesis. This chain is COX assembly mitochondrial protein 2 homolog, found in Caenorhabditis elegans.